The chain runs to 298 residues: GTPase Era (298 aa).

Residues 3–170 enclose the Era-type G domain; sequence KSGFVAILGR…IKLLTDNLEE (168 aa). Residues 11–18 form a G1 region; it reads GRPNVGKS. Residue 11 to 18 participates in GTP binding; the sequence is GRPNVGKS. A G2 region spans residues 37–41; the sequence is QTTRN. The G3 stretch occupies residues 58–61; it reads DTPG. Residues 58-62 and 120-123 contribute to the GTP site; these read DTPGI and NKID. Positions 120–123 are G4; that stretch reads NKID. Residues 149-151 form a G5 region; it reads ISA. Positions 201 to 279 constitute a KH type-2 domain; it reads TQQEVPHSVA…YLETWVKVKK (79 aa).

Belongs to the TRAFAC class TrmE-Era-EngA-EngB-Septin-like GTPase superfamily. Era GTPase family. Monomer.

The protein resides in the cytoplasm. Its subcellular location is the cell membrane. Functionally, an essential GTPase that binds both GDP and GTP, with rapid nucleotide exchange. Plays a role in 16S rRNA processing and 30S ribosomal subunit biogenesis and possibly also in cell cycle regulation and energy metabolism. This Streptococcus pyogenes serotype M3 (strain ATCC BAA-595 / MGAS315) protein is GTPase Era.